Consider the following 287-residue polypeptide: ATP synthase gamma chain (287 aa).

Belongs to the ATPase gamma chain family. As to quaternary structure, F-type ATPases have 2 components, CF(1) - the catalytic core - and CF(0) - the membrane proton channel. CF(1) has five subunits: alpha(3), beta(3), gamma(1), delta(1), epsilon(1). CF(0) has three main subunits: a, b and c.

The protein localises to the cell membrane. Produces ATP from ADP in the presence of a proton gradient across the membrane. The gamma chain is believed to be important in regulating ATPase activity and the flow of protons through the CF(0) complex. The protein is ATP synthase gamma chain of Wolbachia sp. subsp. Drosophila simulans (strain wRi).